Consider the following 177-residue polypeptide: ATP-dependent protease subunit HslV (177 aa).

The active site involves Thr6. Na(+) is bound by residues Ser162, Cys165, and Thr168.

Belongs to the peptidase T1B family. HslV subfamily. In terms of assembly, a double ring-shaped homohexamer of HslV is capped on each side by a ring-shaped HslU homohexamer. The assembly of the HslU/HslV complex is dependent on binding of ATP.

It is found in the cytoplasm. The catalysed reaction is ATP-dependent cleavage of peptide bonds with broad specificity.. Its activity is regulated as follows. Allosterically activated by HslU binding. Protease subunit of a proteasome-like degradation complex believed to be a general protein degrading machinery. This is ATP-dependent protease subunit HslV from Desulforudis audaxviator (strain MP104C).